The primary structure comprises 429 residues: Glutamate-1-semialdehyde 2,1-aminomutase (429 aa).

At K267 the chain carries N6-(pyridoxal phosphate)lysine.

It belongs to the class-III pyridoxal-phosphate-dependent aminotransferase family. HemL subfamily. In terms of assembly, homodimer. The cofactor is pyridoxal 5'-phosphate.

Its subcellular location is the cytoplasm. It catalyses the reaction (S)-4-amino-5-oxopentanoate = 5-aminolevulinate. It functions in the pathway porphyrin-containing compound metabolism; protoporphyrin-IX biosynthesis; 5-aminolevulinate from L-glutamyl-tRNA(Glu): step 2/2. The protein is Glutamate-1-semialdehyde 2,1-aminomutase of Xanthomonas axonopodis pv. citri (strain 306).